We begin with the raw amino-acid sequence, 146 residues long: UPF0756 membrane protein PTH_1817 (146 aa).

The next 4 membrane-spanning stretches (helical) occupy residues 6–26 (LLIG…ILLI), 46–66 (MGLT…KASW), 69–89 (IISS…ALAT), and 105–125 (IVFG…GIPV).

It belongs to the UPF0756 family.

It is found in the cell membrane. The chain is UPF0756 membrane protein PTH_1817 from Pelotomaculum thermopropionicum (strain DSM 13744 / JCM 10971 / SI).